The primary structure comprises 1298 residues: Phosphoribosylformylglycinamidine synthase (1298 aa).

The disordered stretch occupies residues 301–328; it reads APFPGASTGSGGEIRDEGATGRGAKPKA. ATP contacts are provided by residues 305-316, 384-386, and A676; these read GASTGSGGEIRD and TGY. Positions 677, 716, 720, and 884 each coordinate Mg(2+). ATP is bound at residue S886. The Glutamine amidotransferase type-1 domain occupies 1045 to 1298; sequence VAVLREQGVN…MFRNARVWVN (254 aa). Residue C1138 is the Nucleophile of the active site. Catalysis depends on residues H1263 and E1265.

This sequence in the N-terminal section; belongs to the FGAMS family. In terms of assembly, monomer.

The protein localises to the cytoplasm. It carries out the reaction N(2)-formyl-N(1)-(5-phospho-beta-D-ribosyl)glycinamide + L-glutamine + ATP + H2O = 2-formamido-N(1)-(5-O-phospho-beta-D-ribosyl)acetamidine + L-glutamate + ADP + phosphate + H(+). The protein operates within purine metabolism; IMP biosynthesis via de novo pathway; 5-amino-1-(5-phospho-D-ribosyl)imidazole from N(2)-formyl-N(1)-(5-phospho-D-ribosyl)glycinamide: step 1/2. In terms of biological role, phosphoribosylformylglycinamidine synthase involved in the purines biosynthetic pathway. Catalyzes the ATP-dependent conversion of formylglycinamide ribonucleotide (FGAR) and glutamine to yield formylglycinamidine ribonucleotide (FGAM) and glutamate. The chain is Phosphoribosylformylglycinamidine synthase from Pseudomonas fluorescens (strain Pf0-1).